A 55-amino-acid chain; its full sequence is DNA-binding protein (55 aa).

Residues 1-55 (MVYRRRRRSSTGTTYGSTRRRRSSGYRRRPGRPRTYRRSRSRSSTGRRSYRTRYY) are disordered. 2 repeat units span residues 5–10 (RRRRSS) and 19–24 (RRRRSS). The tract at residues 5–24 (RRRRSSTGTTYGSTRRRRSS) is 2 X 6 AA repeats of R-R-R-R-S-S. Over residues 18–41 (TRRRRSSGYRRRPGRPRTYRRSRS) the composition is skewed to basic residues.

Interacts with protein AC132. Post-translationally, phosphorylated.

It localises to the virion. The protein resides in the host cytoplasm. In terms of biological role, plays a role in viral DNA packaging and nucleocapsid assembly. Promotes viral gene transcription during the late stage of infection while it is non-essential for the basal level of viral gene transcription. The sequence is that of DNA-binding protein (P6.9) from Lepidoptera (butterflies and moths).